Here is a 50-residue protein sequence, read N- to C-terminus: Bacterioferritin (50 aa).

The region spanning 1–50 is the Ferritin-like diiron domain; it reads MKGDPKVIDYLNKALRHELTAINQYWLHYRLLDNWGIKDLAKKWRAESIE. Fe cation is bound at residue Glu-18.

The protein belongs to the bacterioferritin family. As to quaternary structure, homooligomer of 24 subunits, arranged as 12 dimers, that are packed together to form an approximately spherical molecule with a central cavity, in which large amounts of iron can be deposited. It depends on heme b as a cofactor.

The catalysed reaction is 4 Fe(2+) + O2 + 4 H(+) = 4 Fe(3+) + 2 H2O. The enzyme catalyses Fe(2+)(in) = Fe(2+)(out). Its function is as follows. Iron-storage protein, whose ferroxidase center binds Fe(2+), oxidizes it using dioxygen to Fe(3+), and participates in the subsequent Fe(3+) oxide mineral core formation within the central cavity of the BFR protein shell. May act as one of the electron carriers in the reverse electron-transport system from cytochrome c-552 to NADP(+). The sequence is that of Bacterioferritin (bfr) from Nitrobacter winogradskyi (Nitrobacter agilis).